We begin with the raw amino-acid sequence, 198 residues long: NAD(P)H dehydrogenase (quinone) (198 aa).

The Flavodoxin-like domain maps to 4 to 189; the sequence is ILVLYYSMYG…SIARYQGEYV (186 aa). Residues 10–15 and 78–80 each bind FMN; these read SMYGHI and TRF. Tyrosine 12 is an NAD(+) binding site. Tryptophan 98 lines the substrate pocket. FMN contacts are provided by residues 113–118 and histidine 133; that span reads STGTGG.

Belongs to the WrbA family. FMN serves as cofactor.

It catalyses the reaction a quinone + NADH + H(+) = a quinol + NAD(+). The catalysed reaction is a quinone + NADPH + H(+) = a quinol + NADP(+). The polypeptide is NAD(P)H dehydrogenase (quinone) (Salmonella typhi).